Consider the following 277-residue polypeptide: NH(3)-dependent NAD(+) synthetase (277 aa).

36-43 contributes to the ATP binding site; the sequence is GLSGGIDS. Residue Asp42 participates in Mg(2+) binding. Arg118 contacts deamido-NAD(+). ATP is bound at residue Thr138. Glu143 contributes to the Mg(2+) binding site. Positions 167 and 189 each coordinate ATP.

It belongs to the NAD synthetase family. Homodimer.

It catalyses the reaction deamido-NAD(+) + NH4(+) + ATP = AMP + diphosphate + NAD(+) + H(+). Its pathway is cofactor biosynthesis; NAD(+) biosynthesis; NAD(+) from deamido-NAD(+) (ammonia route): step 1/1. In terms of biological role, catalyzes the ATP-dependent amidation of deamido-NAD to form NAD. Uses ammonia as a nitrogen source. This chain is NH(3)-dependent NAD(+) synthetase, found in Chlorobium phaeobacteroides (strain DSM 266 / SMG 266 / 2430).